The chain runs to 194 residues: Recombination protein RecR (194 aa).

Residues 55 to 70 (CRECGNLAEGELCPIC) form a C4-type zinc finger. One can recognise a Toprim domain in the interval 78–171 (SLLAVVESVA…RVTRPAYGLP (94 aa)).

It belongs to the RecR family.

May play a role in DNA repair. It seems to be involved in an RecBC-independent recombinational process of DNA repair. It may act with RecF and RecO. In Thermus thermophilus (strain ATCC 27634 / DSM 579 / HB8), this protein is Recombination protein RecR.